Consider the following 350-residue polypeptide: Neutral protease 2 homolog SNOG_10522 (350 aa).

An N-terminal signal peptide occupies residues 1-18; it reads MKVSSQLAVAALASFATA. A propeptide spanning residues 19–180 is cleaved from the precursor; sequence ASVDVHKRET…AKALNKRTAI (162 aa). Cystine bridges form between C184–C251 and C258–C276. H301 contacts Zn(2+). Residue E302 is part of the active site. 2 residues coordinate Zn(2+): H305 and D316.

This sequence belongs to the peptidase M35 family. Zn(2+) is required as a cofactor.

The protein localises to the secreted. The enzyme catalyses Preferential cleavage of bonds with hydrophobic residues in P1'. Also 3-Asn-|-Gln-4 and 8-Gly-|-Ser-9 bonds in insulin B chain.. In terms of biological role, secreted metalloproteinase that allows assimilation of proteinaceous substrates. Shows high activities on basic nuclear substrates such as histone and protamine. The protein is Neutral protease 2 homolog SNOG_10522 of Phaeosphaeria nodorum (strain SN15 / ATCC MYA-4574 / FGSC 10173) (Glume blotch fungus).